Here is a 532-residue protein sequence, read N- to C-terminus: Probable cytochrome c oxidase subunit 1 (532 aa).

8 helical membrane-spanning segments follow: residues 33–53, 74–94, 95–115, 118–138, 163–183, 200–220, 252–272, and 284–304; these read IMYI…SLLF, VLIT…ALFG, GFGN…FPRL, ISFW…FVDG, MAIF…INLI, PLFV…MPVL, LFWF…FGIV, and IFGY…GFIV. Position 79 (H79) interacts with Fe(II)-heme a. Residues H258 and Y262 each contribute to the Cu cation site. The Cu cation site is built by H307 and H308. 2 consecutive transmembrane segments (helical) span residues 318–338 and 355–375; these read ALIY…IKIF and MLFS…GIIL. H393 is a binding site for heme a3. 3 consecutive transmembrane segments (helical) span residues 394 to 414, 431 to 451, and 473 to 493; these read FHYT…YYWF, FWIT…LGLA, and IGAG…FYTL. Residue H395 coordinates Fe(II)-heme a.

The protein belongs to the heme-copper respiratory oxidase family.

The protein localises to the cell membrane. It catalyses the reaction 4 Fe(II)-[cytochrome c] + O2 + 8 H(+)(in) = 4 Fe(III)-[cytochrome c] + 2 H2O + 4 H(+)(out). It participates in energy metabolism; oxidative phosphorylation. In terms of biological role, cytochrome c oxidase is the component of the respiratory chain that catalyzes the reduction of oxygen to water. Subunits 1-3 form the functional core of the enzyme complex. CO I is the catalytic subunit of the enzyme. Electrons originating in cytochrome c are transferred via the copper A center of subunit 2 and heme A of subunit 1 to the bimetallic center formed by heme A3 and copper B. This Rickettsia felis (strain ATCC VR-1525 / URRWXCal2) (Rickettsia azadi) protein is Probable cytochrome c oxidase subunit 1 (ctaD).